Reading from the N-terminus, the 206-residue chain is Small ribosomal subunit protein uS4 (206 aa).

In terms of domain architecture, S4 RNA-binding spans 96-156 (SRLDNVVYRM…EKSKKQLRIQ (61 aa)).

This sequence belongs to the universal ribosomal protein uS4 family. In terms of assembly, part of the 30S ribosomal subunit. Contacts protein S5. The interaction surface between S4 and S5 is involved in control of translational fidelity.

In terms of biological role, one of the primary rRNA binding proteins, it binds directly to 16S rRNA where it nucleates assembly of the body of the 30S subunit. With S5 and S12 plays an important role in translational accuracy. This chain is Small ribosomal subunit protein uS4, found in Francisella philomiragia subsp. philomiragia (strain ATCC 25017 / CCUG 19701 / FSC 153 / O#319-036).